A 164-amino-acid polypeptide reads, in one-letter code: Kunitz-type serine protease inhibitor BbKI (164 aa).

It belongs to the protease inhibitor I3 (leguminous Kunitz-type inhibitor) family. In terms of assembly, monomer.

The protein localises to the secreted. Its function is as follows. Inhibits bovine trypsin, human plasma kallikrein and plasmin and weakly bovine chymotrypsin. This Bauhinia bauhinioides (Perlebia bauhinoides) protein is Kunitz-type serine protease inhibitor BbKI.